A 327-amino-acid polypeptide reads, in one-letter code: Immunodominant envelope protein p35 (327 aa).

Residues Lys-41–Val-69 are disordered. Basic and acidic residues predominate over residues Ser-59–Val-69. The chain crosses the membrane as a helical span at residues Ile-291–Asn-311.

The protein belongs to the poxviruses protein p35 family.

It localises to the virion membrane. In terms of biological role, envelope protein that binds to the cell surface to provide virion attachment to target cell. The sequence is that of Immunodominant envelope protein p35 from Fowlpox virus (strain NVSL) (FPV).